Reading from the N-terminus, the 422-residue chain is Transcription termination factor Rho (422 aa).

One can recognise a Rho RNA-BD domain in the interval 52 to 127 (EVGGDGVLEV…TRVTKINFDD (76 aa)). ATP contacts are provided by residues 173–178 (GKGQRG), 185–190 (RTGKTV), and Arg216.

Belongs to the Rho family. In terms of assembly, homohexamer. The homohexamer assembles into an open ring structure.

Functionally, facilitates transcription termination by a mechanism that involves Rho binding to the nascent RNA, activation of Rho's RNA-dependent ATPase activity, and release of the mRNA from the DNA template. The sequence is that of Transcription termination factor Rho from Cereibacter sphaeroides (strain ATCC 17023 / DSM 158 / JCM 6121 / CCUG 31486 / LMG 2827 / NBRC 12203 / NCIMB 8253 / ATH 2.4.1.) (Rhodobacter sphaeroides).